The chain runs to 944 residues: Isoleucine--tRNA ligase (944 aa).

The 'HIGH' region motif lies at 58 to 68 (PYANGSIHIGH). Glu563 contributes to the L-isoleucyl-5'-AMP binding site. A 'KMSKS' region motif is present at residues 604-608 (KMSKS). Lys607 contributes to the ATP binding site. Positions 907, 910, 927, and 930 each coordinate Zn(2+).

This sequence belongs to the class-I aminoacyl-tRNA synthetase family. IleS type 1 subfamily. In terms of assembly, monomer. It depends on Zn(2+) as a cofactor.

The protein resides in the cytoplasm. The catalysed reaction is tRNA(Ile) + L-isoleucine + ATP = L-isoleucyl-tRNA(Ile) + AMP + diphosphate. In terms of biological role, catalyzes the attachment of isoleucine to tRNA(Ile). As IleRS can inadvertently accommodate and process structurally similar amino acids such as valine, to avoid such errors it has two additional distinct tRNA(Ile)-dependent editing activities. One activity is designated as 'pretransfer' editing and involves the hydrolysis of activated Val-AMP. The other activity is designated 'posttransfer' editing and involves deacylation of mischarged Val-tRNA(Ile). This Salmonella typhimurium (strain LT2 / SGSC1412 / ATCC 700720) protein is Isoleucine--tRNA ligase.